The primary structure comprises 448 residues: Ribosomal protein uS12 methylthiotransferase RimO (448 aa).

One can recognise an MTTase N-terminal domain in the interval 7–123; sequence EKVSLVSLGC…IAEIIAEKEG (117 aa). Positions 16, 52, 86, 161, 165, and 168 each coordinate [4Fe-4S] cluster. The Radical SAM core domain occupies 147–377; it reads SSPYYTAYLK…MRTQARVSFK (231 aa). In terms of domain architecture, TRAM spans 380-448; it reads RSLVDTEELV…DYDLIGEIVP (69 aa).

The protein belongs to the methylthiotransferase family. RimO subfamily. The cofactor is [4Fe-4S] cluster.

It localises to the cytoplasm. The catalysed reaction is L-aspartate(89)-[ribosomal protein uS12]-hydrogen + (sulfur carrier)-SH + AH2 + 2 S-adenosyl-L-methionine = 3-methylsulfanyl-L-aspartate(89)-[ribosomal protein uS12]-hydrogen + (sulfur carrier)-H + 5'-deoxyadenosine + L-methionine + A + S-adenosyl-L-homocysteine + 2 H(+). Its function is as follows. Catalyzes the methylthiolation of an aspartic acid residue of ribosomal protein uS12. This is Ribosomal protein uS12 methylthiotransferase RimO from Geotalea uraniireducens (strain Rf4) (Geobacter uraniireducens).